The chain runs to 79 residues: Conotoxin VnMKLT1-01122 (79 aa).

Positions 1 to 22 (MKLTCMKIVAVLFLTAWTFVTA) are cleaved as a signal peptide. Residues 23 to 48 (DDSRNGLEYLFPKAHYEMNPEASKLN) constitute a propeptide that is removed on maturation. Q51 carries the post-translational modification Pyrrolidone carboxylic acid. 3 disulfide bridges follow: C53–C70, C60–C74, and C69–C78.

The protein belongs to the conotoxin O1 superfamily. Expressed by the venom duct.

It is found in the secreted. The sequence is that of Conotoxin VnMKLT1-01122 from Conus ventricosus (Mediterranean cone).